The chain runs to 303 residues: MSAVDKTNNLPTLDTLQMVISDVDGTLLDKHHRFHFRTYRAMKYIREKYPNFPIVLATGKQRSAVDLIRIPLDLDAFPAAHVNGCVLYNKGKIVYADHLKPEVVMEVVEATKGNPNIANVVYDEHYVYALTPGREDMKNVKRLAEIGEKVDFSMPCEEAIEKVKSGEIKVIKMAVCEDPDKLDVVRDILGKFPREKFATTQALEFCIELIPSNSNKGTALQYITSNILPEVKNENVISFGDGQNDLSMFAIAGWSVAIKNGMPIAIEKAKAVSRVGNEEGAVGEVLERIFNIPEDYTPPPYTF.

Residue Ser63 is modified to Phosphoserine.

It belongs to the HAD-like hydrolase superfamily.

It is found in the cytoplasm. The protein resides in the nucleus. This is an uncharacterized protein from Schizosaccharomyces pombe (strain 972 / ATCC 24843) (Fission yeast).